The following is a 359-amino-acid chain: Diacyltrehalose acyltransferase Chp2 (359 aa).

Residues 4–24 (VIAGAFAVWLVGWAGGFGTAI) form a helical membrane-spanning segment. The PE-PPE domain maps to 79–316 (PNAKHDLIDY…VLQPQIDAAY (238 aa)).

This sequence belongs to the mycobacterial PPE family.

The protein resides in the cell inner membrane. Activity is probably potentiated by the DAT/PAT transporter MmpL10. Inhibited by the lipase inhibitor tetrahydrolipstatin (THL). In terms of biological role, involved in the final steps of polyacyltrehalose (PAT) biosynthesis. Catalyzes the transfer of three mycolipenoyl groups onto diacyltrehalose (DAT) to form PAT. The chain is Diacyltrehalose acyltransferase Chp2 from Mycobacterium tuberculosis (strain ATCC 25618 / H37Rv).